A 217-amino-acid chain; its full sequence is 2-phospho-L-lactate guanylyltransferase (217 aa).

This sequence belongs to the CofC family. As to quaternary structure, homodimer.

It catalyses the reaction (2S)-2-phospholactate + GTP + H(+) = (2S)-lactyl-2-diphospho-5'-guanosine + diphosphate. It functions in the pathway cofactor biosynthesis; coenzyme F420 biosynthesis. Guanylyltransferase that catalyzes the activation of (2S)-2-phospholactate (2-PL) as (2S)-lactyl-2-diphospho-5'-guanosine, via the condensation of 2-PL with GTP. It is involved in the biosynthesis of coenzyme F420, a hydride carrier cofactor. The protein is 2-phospho-L-lactate guanylyltransferase of Methanospirillum hungatei JF-1 (strain ATCC 27890 / DSM 864 / NBRC 100397 / JF-1).